The chain runs to 417 residues: RH-like protein (417 aa).

11 helical membrane-spanning segments follow: residues 12–32, 44–64, 77–97, 125–145, 172–192, 203–223, 238–258, 265–285, 287–307, 331–351, and 358–378; these read CLPLWALTLEAALILLFFFFT, LVASYQVCQDLTVMAVLGLGF, VAFNLFLLALGVQWAILLDGF, ISMNAVLGKVNLVQLVVMELV, IHVFAAYFGLTVAWCLPKPLP, TSPSLFAMLGTLFLWMFWPTF, VFSTYYALAVSAVTAISVSSL, INMTYMHNAALAGGVALSASC, VIHSPWIAMVLGLVAGLISIG, TFGLPALLGEITYIVLMALRV, and MIGFQVLLSTGTLSLAMAMSI.

This sequence belongs to the ammonium transporter (TC 2.A.49) family. Rh subfamily.

Its subcellular location is the membrane. May be part of an oligomeric complex which is likely to have a transport or channel function in the erythrocyte membrane. The polypeptide is RH-like protein (Macaca mulatta (Rhesus macaque)).